Here is a 295-residue protein sequence, read N- to C-terminus: Transcriptional regulator SirC (295 aa).

The HTH araC/xylS-type domain maps to 195–292; the sequence is EKVYNIIISD…KITPLSFMRT (98 aa). DNA-binding regions (H-T-H motif) lie at residues 212–233 and 259–282; these read AEVAGKLFMSVSSLKRKLAAEE and ISQVATMCGYDTPSYFIAIFKRHF.

Its function is as follows. Positive regulator of the expression of the invasion-associated type III secretion system encoded within SPI-1 (pathogenicity island 1). The protein is Transcriptional regulator SirC (sirC) of Salmonella typhi.